The primary structure comprises 383 residues: Corticosteroid-binding globulin (383 aa).

N-linked (GlcNAc...) asparagine glycans are attached at residues N74 and N154. A cortisol-binding site is contributed by Q232. N238 carries N-linked (GlcNAc...) asparagine glycosylation. Q264 contributes to the cortisol binding site. N308 is a glycosylation site (N-linked (GlcNAc...) asparagine). W371 is a binding site for cortisol.

Belongs to the serpin family. As to expression, produced and secreted by hepatocytes, but has also been identified in a number of glycocorticoid responsive cells (it is found in maternal lung, spleen, and ovary and fetal kidney).

It is found in the secreted. In terms of biological role, major transport protein for glucocorticoids and progestins in the blood of almost all vertebrate species. In Oryctolagus cuniculus (Rabbit), this protein is Corticosteroid-binding globulin (SERPINA6).